Consider the following 522-residue polypeptide: Maturase K (522 aa).

This sequence belongs to the intron maturase 2 family. MatK subfamily.

It localises to the plastid. The protein resides in the chloroplast. Usually encoded in the trnK tRNA gene intron. Probably assists in splicing its own and other chloroplast group II introns. The chain is Maturase K from Iris domestica (Leopard lily).